We begin with the raw amino-acid sequence, 555 residues long: Inositol 1,4,5-trisphosphate receptor-interacting protein-like 1 (555 aa).

The signal sequence occupies residues 1–24 (MNVDAEASMAVISLLFLAVMYVVH). Residues 25 to 103 (HPLMVSDRMD…WPFQADGQEG (79 aa)) are Extracellular-facing. Positions 38–74 (LARSRQLEKRMSEEMRLLEMEFEERKRAAEQRQKAEN) form a coiled coil. The chain crosses the membrane as a helical span at residues 104–124 (PLGWMLGNLWNTGLFCLFLVF). At 125-555 (ELLRQNMQHE…LPHAPLAAAP (431 aa)) the chain is on the cytoplasmic side.

The protein belongs to the ITPRIP family. Expressed in testis and tumoral cells.

The protein resides in the cell membrane. Functions as a ligand of CD3E, inhibiting TCR-CD3 complex signaling to regulate T cell activation. Induces stable CD3E-NCK1 binding, thereby preventing the CD3E-ZAP70 interaction and subsequently inhibiting the activation of the downstream ERK-NFkB signaling cascade and calcium influx. The protein is Inositol 1,4,5-trisphosphate receptor-interacting protein-like 1 of Homo sapiens (Human).